A 509-amino-acid polypeptide reads, in one-letter code: Histidine ammonia-lyase (509 aa).

The 5-imidazolinone (Ala-Gly) cross-link spans 142–144; it reads ASG. Residue Ser143 is modified to 2,3-didehydroalanine (Ser).

Belongs to the PAL/histidase family. Contains an active site 4-methylidene-imidazol-5-one (MIO), which is formed autocatalytically by cyclization and dehydration of residues Ala-Ser-Gly.

The protein resides in the cytoplasm. It carries out the reaction L-histidine = trans-urocanate + NH4(+). It functions in the pathway amino-acid degradation; L-histidine degradation into L-glutamate; N-formimidoyl-L-glutamate from L-histidine: step 1/3. In Sphingopyxis alaskensis (strain DSM 13593 / LMG 18877 / RB2256) (Sphingomonas alaskensis), this protein is Histidine ammonia-lyase.